Consider the following 488-residue polypeptide: Solanidine UDP-glucose glucosyltransferase 1 (488 aa).

Catalysis depends on His-23, which acts as the Proton acceptor. His-23 contributes to the an anthocyanidin binding site. Asp-127 (charge relay) is an active-site residue. Residues Val-352, Gln-354, His-369, Asn-373, Ser-374, and Glu-377 each coordinate UDP-alpha-D-glucose. Ala-392 is an an anthocyanidin binding site. UDP-alpha-D-glucose contacts are provided by Asp-393 and Gln-394.

It belongs to the UDP-glycosyltransferase family. Expressed in the shoot apical meristem (SAM) and tuber.

It catalyses the reaction solasodine + UDP-alpha-D-glucose = solasodine 3-beta-D-glucoside + UDP + H(+). It carries out the reaction solanidine + UDP-alpha-D-glucose = solanidine 3-O-beta-D-glucopyranoside + UDP + H(+). The catalysed reaction is tomatidine + UDP-alpha-D-glucose = tomatidine 3-O-beta-D-glucopyranoside + UDP + H(+). In terms of biological role, glucosyltransferase involved in the glucosylation of the steroidal alkaloid aglycons solanidine, solasodine and tomatidine to produce their corresponding glycoalkaloids. The protein is Solanidine UDP-glucose glucosyltransferase 1 of Solanum tuberosum (Potato).